The chain runs to 311 residues: MNFEHTSVLLKECIEALDIKENGIYVDGTLGGAGHSQEILKVLGKEGLLIGIDQDENALSAAGERLEEHGTKVKLVHDNFHNLDKILENLEITTIDGVLLDLGVSSHQLDERERGFSYMQDAPLDMRMDRRSGFSARDIVNDYSEKELERIIKEYGEDRWARRIAQFIVQERELAPIETTHQMVEVIKKAVPKGARKDGPHPAKRTFQAIRIEVNQELEIIEATIEAAAKHMKPGGRIAIISFHSLEDRIVKNVFRRLQNPCVCPPQFPVCKCEKEQMVKIVTRKPILPSEAELEVNPRSRSAKLRVAERV.

S-adenosyl-L-methionine-binding positions include 33–35 (AGH), Asp-53, Phe-80, Asp-101, and Gln-108.

The protein belongs to the methyltransferase superfamily. RsmH family.

It localises to the cytoplasm. It catalyses the reaction cytidine(1402) in 16S rRNA + S-adenosyl-L-methionine = N(4)-methylcytidine(1402) in 16S rRNA + S-adenosyl-L-homocysteine + H(+). In terms of biological role, specifically methylates the N4 position of cytidine in position 1402 (C1402) of 16S rRNA. The protein is Ribosomal RNA small subunit methyltransferase H 1 of Alkaliphilus metalliredigens (strain QYMF).